The chain runs to 84 residues: Large ribosomal subunit protein bL27c (84 aa).

Residues 1-23 (MAHKKGAGSTKNGRDSNAKRLGV) are disordered.

The protein belongs to the bacterial ribosomal protein bL27 family.

The protein resides in the plastid. Its subcellular location is the chloroplast. In Thalassiosira pseudonana (Marine diatom), this protein is Large ribosomal subunit protein bL27c.